The primary structure comprises 239 residues: Ribosomal RNA small subunit methyltransferase G (239 aa).

Residues glycine 77, phenylalanine 82, 128–129 (AE), and arginine 147 each bind S-adenosyl-L-methionine. Residues 216–239 (EKKKQTPKKYPRKPGTPNKSPIEG) are disordered.

The protein belongs to the methyltransferase superfamily. RNA methyltransferase RsmG family.

It localises to the cytoplasm. Functionally, specifically methylates the N7 position of guanine in position 535 of 16S rRNA. This is Ribosomal RNA small subunit methyltransferase G from Bacillus pumilus (strain SAFR-032).